A 343-amino-acid chain; its full sequence is Heat-inducible transcription repressor HrcA (343 aa).

Belongs to the HrcA family.

Functionally, negative regulator of class I heat shock genes (grpE-dnaK-dnaJ and groELS operons). Prevents heat-shock induction of these operons. The polypeptide is Heat-inducible transcription repressor HrcA (Natranaerobius thermophilus (strain ATCC BAA-1301 / DSM 18059 / JW/NM-WN-LF)).